We begin with the raw amino-acid sequence, 583 residues long: Hyaluronan synthase-related protein (583 aa).

Over 1-29 (MENTTDPENIPVSKPKYPTIRRILSQTFR) the chain is Cytoplasmic. Residues 30–50 (ILLLFSITTAYVLGYQALCHQ) traverse the membrane as a helical segment. The Extracellular segment spans residues 51-52 (GL). The chain crosses the membrane as a helical span at residues 53–73 (LITFGLYGAAMLLHLLMQGIF). The Cytoplasmic portion of the chain corresponds to 74–393 (ANLEIRRIEK…CNAQWWHQHH (320 aa)). Residues 394–414 (IWMTYESATGIFFPFFVTAVL) form a helical membrane-spanning segment. Residues 415–425 (IRLMYSSSLCN) are Extracellular-facing. The helical transmembrane segment at 426–446 (IVWLFLCIQIMSLLLSLYASW) threads the bilayer. Topologically, residues 447–457 (QSKKLSMVLMS) are cytoplasmic. The chain crosses the membrane as a helical span at residues 458 to 478 (LYSTLYIIWLLPCQLVALLTI). The Extracellular portion of the chain corresponds to 479-497 (AKSDWGTSGRKKVVNNYVP). A helical membrane pass occupies residues 498 to 518 (LFSLSIWAAVLLGGLCYSMYI). The Cytoplasmic segment spans residues 519–535 (GCRKDWSKPQANRELYH). The helical transmembrane segment at 536–556 (LLYGCAGYMAYWVLMTVIYCV) threads the bilayer. Residues 557–583 (SGSCCKMRSQAVPQTHDITSLSVSLLV) lie on the Extracellular side of the membrane.

Belongs to the NodC/HAS family.

The protein localises to the membrane. The chain is Hyaluronan synthase-related protein (has-rs) from Xenopus laevis (African clawed frog).